Reading from the N-terminus, the 438-residue chain is UDP-N-acetylmuramate--L-alanine ligase (438 aa).

ATP is bound at residue 108-114; sequence GAHGKTS.

The protein belongs to the MurCDEF family.

It localises to the cytoplasm. It carries out the reaction UDP-N-acetyl-alpha-D-muramate + L-alanine + ATP = UDP-N-acetyl-alpha-D-muramoyl-L-alanine + ADP + phosphate + H(+). The protein operates within cell wall biogenesis; peptidoglycan biosynthesis. Functionally, cell wall formation. The protein is UDP-N-acetylmuramate--L-alanine ligase of Oceanobacillus iheyensis (strain DSM 14371 / CIP 107618 / JCM 11309 / KCTC 3954 / HTE831).